Here is an 80-residue protein sequence, read N- to C-terminus: Large ribosomal subunit protein uL24 (80 aa).

The protein belongs to the universal ribosomal protein uL24 family. As to quaternary structure, part of the 50S ribosomal subunit.

One of two assembly initiator proteins, it binds directly to the 5'-end of the 23S rRNA, where it nucleates assembly of the 50S subunit. In terms of biological role, one of the proteins that surrounds the polypeptide exit tunnel on the outside of the subunit. This Chlorobaculum parvum (strain DSM 263 / NCIMB 8327) (Chlorobium vibrioforme subsp. thiosulfatophilum) protein is Large ribosomal subunit protein uL24.